Here is a 112-residue protein sequence, read N- to C-terminus: MSGKIKVTFIINDGEEKTVEAPIGLSILEIAHSNDLDLEGACEGSLACATCHVILEEEFYNKLKKPTEAEEDMLDLAFGLTDTSRLGCQIILTEELDGIKVRLPSATRNIKL.

The 103-residue stretch at 5–107 (IKVTFIINDG…GIKVRLPSAT (103 aa)) folds into the 2Fe-2S ferredoxin-type domain. The [2Fe-2S] cluster site is built by Cys42, Cys48, Cys51, and Cys88.

This sequence belongs to the adrenodoxin/putidaredoxin family. The cofactor is [2Fe-2S] cluster.

In terms of biological role, ferredoxin are iron-sulfur proteins that transfer electrons in a wide variety of metabolic reactions. The chain is 2Fe-2S ferredoxin (fdxB) from Rickettsia montanensis.